The following is a 185-amino-acid chain: Elongation factor P (185 aa).

The protein belongs to the elongation factor P family.

Its subcellular location is the cytoplasm. It participates in protein biosynthesis; polypeptide chain elongation. Involved in peptide bond synthesis. Stimulates efficient translation and peptide-bond synthesis on native or reconstituted 70S ribosomes in vitro. Probably functions indirectly by altering the affinity of the ribosome for aminoacyl-tRNA, thus increasing their reactivity as acceptors for peptidyl transferase. The protein is Elongation factor P of Geobacillus kaustophilus (strain HTA426).